We begin with the raw amino-acid sequence, 322 residues long: Ribosomal RNA small subunit methyltransferase H (322 aa).

S-adenosyl-L-methionine contacts are provided by residues 43–45 (GGY), aspartate 60, phenylalanine 86, aspartate 104, and glutamine 111.

This sequence belongs to the methyltransferase superfamily. RsmH family.

It localises to the cytoplasm. The catalysed reaction is cytidine(1402) in 16S rRNA + S-adenosyl-L-methionine = N(4)-methylcytidine(1402) in 16S rRNA + S-adenosyl-L-homocysteine + H(+). Functionally, specifically methylates the N4 position of cytidine in position 1402 (C1402) of 16S rRNA. The sequence is that of Ribosomal RNA small subunit methyltransferase H from Caulobacter sp. (strain K31).